Here is a 341-residue protein sequence, read N- to C-terminus: KH domain-containing RNA-binding protein QKI (341 aa).

The tract at residues 11–82 is qua1 domain; involved in homodimerization; sequence PNPTPDYLMQ…PDAVGPIVQL (72 aa). The region spanning 87 to 153 is the KH domain; the sequence is YVPVKEYPDF…WEHLNEDLHV (67 aa). Residues 182–213 form a qua2 domain; involved in RNA binding region; sequence AAEGEDSLKKMQLMELAILNGTYRDANIKSPA. S188 carries the post-translational modification Phosphoserine. R227 carries the post-translational modification Omega-N-methylarginine. An Asymmetric dimethylarginine; by CARM1; alternate modification is found at R242. R242 is modified (omega-N-methylarginine; alternate). R256 is modified (omega-N-methylarginine). The SH3-binding motif lies at 276 to 279; the sequence is PPGP. Residues 324 to 330 carry the Nuclear localization signal motif; sequence RVHPYQR.

It belongs to the quaking family. As to quaternary structure, homodimer; does not require RNA to homodimerize. Able to heterodimerize with BICC1. Methylated by PRMT1. Post-translationally, tyrosine phosphorylated at its C-terminus, probably by FYN. Phosphorylation leads to decreased mRNA-binding affinity, affecting transport and/or stabilization of MBP mRNA. In terms of processing, ubiquitinated by RNF6 in macrophages, leading to its degradation. In terms of tissue distribution, present in myelinating oligodendrocytes (at protein level).

The protein resides in the nucleus. It is found in the cytoplasm. In terms of biological role, RNA reader protein, which recognizes and binds specific RNAs, thereby regulating RNA metabolic processes, such as pre-mRNA splicing, circular RNA (circRNA) formation, mRNA export, mRNA stability and/or translation. Involved in various cellular processes, such as mRNA storage into stress granules, apoptosis, lipid deposition, interferon response, glial cell fate and development. Binds to the 5'-NACUAAY-N(1,20)-UAAY-3' RNA core sequence. Acts as a mRNA modification reader that specifically recognizes and binds mRNA transcripts modified by internal N(7)-methylguanine (m7G). Promotes the formation of circular RNAs (circRNAs) during the epithelial to mesenchymal transition and in cardiomyocytes: acts by binding to sites flanking circRNA-forming exons. CircRNAs are produced by back-splicing circularization of pre-mRNAs. Plays a central role in myelinization via 3 distinct mechanisms. First, acts by protecting and promoting stability of target mRNAs such as MBP, SIRT2 and CDKN1B, which promotes oligodendrocyte differentiation. Second, participates in mRNA transport by regulating the nuclear export of MBP mRNA. Finally, indirectly regulates mRNA splicing of MAG pre-mRNA during oligodendrocyte differentiation by acting as a negative regulator of MAG exon 12 alternative splicing: acts by binding to HNRNPA1 mRNA splicing factor, preventing its translation. Involved in microglia differentiation and remyelination by regulating microexon alternative splicing of the Rho GTPase pathway. Involved in macrophage differentiation: promotes monocyte differentiation by regulating pre-mRNA splicing in naive peripheral blood monocytes. Acts as an important regulator of muscle development: required for the contractile function of cardiomyocytes by regulating alternative splicing of cardiomyocyte transcripts. Acts as a negative regulator of thermogenesis by decreasing stability, nuclear export and translation of mRNAs encoding PPARGC1A and UCP1. Also required for visceral endoderm function and blood vessel development. May also play a role in smooth muscle development. In addition to its RNA-binding activity, also acts as a nuclear transcription coactivator for SREBF2/SREBP2. The sequence is that of KH domain-containing RNA-binding protein QKI from Rattus norvegicus (Rat).